Reading from the N-terminus, the 1026-residue chain is Lon protease homolog, mitochondrial (1026 aa).

The transit peptide at 1 to 29 directs the protein to the mitochondrion; it reads MLGTRVTRAVYTRAPLKLQLRALGLHRRY. 2 disordered regions span residues 29 to 55 and 185 to 206; these read YVHNGSKNDEGSSTSTTTNKEENDKKL and ASEETKDEETVDKTESATDKVS. A Lon N-terminal domain is found at 62-345; that stretch reads MLALPISRRP…KSLLVLKKEL (284 aa). Residues 185–194 show a composition bias toward acidic residues; sequence ASEETKDEET. Basic and acidic residues predominate over residues 195–206; it reads VDKTESATDKVS. 497 to 504 provides a ligand contact to ATP; the sequence is GPPGVGKT. Positions 711–785 are disordered; the sequence is TEPLVSTSEE…EEEEDTSMIV (75 aa). A compositionally biased stretch (polar residues) spans 714 to 737; the sequence is LVSTSEEPQLSQTNQNISSSSAED. The 187-residue stretch at 815-1001 folds into the Lon proteolytic domain; that stretch reads TTPPGVIMGL…DDIYKRLFSG (187 aa). Residues serine 907 and lysine 950 contribute to the active site.

It belongs to the peptidase S16 family. As to quaternary structure, homohexamer or homoheptamer. Organized in a ring with a central cavity.

It is found in the mitochondrion matrix. The enzyme catalyses Hydrolysis of proteins in presence of ATP.. Functionally, ATP-dependent serine protease that mediates the selective degradation of misfolded, unassembled or oxidatively damaged polypeptides as well as certain short-lived regulatory proteins in the mitochondrial matrix. May also have a chaperone function in the assembly of inner membrane protein complexes. Participates in the regulation of mitochondrial gene expression and in the maintenance of the integrity of the mitochondrial genome. Binds to mitochondrial DNA in a site-specific manner. In Candida glabrata (strain ATCC 2001 / BCRC 20586 / JCM 3761 / NBRC 0622 / NRRL Y-65 / CBS 138) (Yeast), this protein is Lon protease homolog, mitochondrial.